A 240-amino-acid chain; its full sequence is Methylthioribulose-1-phosphate dehydratase (240 aa).

Position 99 (Cys-99) interacts with substrate. 2 residues coordinate Zn(2+): His-116 and His-118. Residue Glu-145 is the Proton donor/acceptor of the active site. Residue His-201 participates in Zn(2+) binding.

This sequence belongs to the aldolase class II family. MtnB subfamily. Zn(2+) is required as a cofactor.

The protein localises to the cytoplasm. The enzyme catalyses 5-(methylsulfanyl)-D-ribulose 1-phosphate = 5-methylsulfanyl-2,3-dioxopentyl phosphate + H2O. Its pathway is amino-acid biosynthesis; L-methionine biosynthesis via salvage pathway; L-methionine from S-methyl-5-thio-alpha-D-ribose 1-phosphate: step 2/6. Its function is as follows. Catalyzes the dehydration of methylthioribulose-1-phosphate (MTRu-1-P) into 2,3-diketo-5-methylthiopentyl-1-phosphate (DK-MTP-1-P). The protein is Methylthioribulose-1-phosphate dehydratase of Ajellomyces capsulatus (strain H143) (Darling's disease fungus).